The primary structure comprises 475 residues: Lactate utilization protein B (475 aa).

4Fe-4S ferredoxin-type domains lie at 304 to 334 (GTEF…GHSY) and 353 to 382 (YEDH…LHEL). Residues C313, C316, C319, C323, C366, C369, and C373 each coordinate [4Fe-4S] cluster.

Belongs to the LutB/YkgF family.

In terms of biological role, is involved in L-lactate degradation and allows cells to grow with lactate as the sole carbon source. Has probably a role as an electron transporter during oxidation of L-lactate. This Shouchella clausii (strain KSM-K16) (Alkalihalobacillus clausii) protein is Lactate utilization protein B.